A 203-amino-acid polypeptide reads, in one-letter code: Superoxide dismutase [Mn/Fe] (203 aa).

Fe(3+) is bound by residues H27, H81, D163, and H167. Mn(2+) contacts are provided by H27, H81, D163, and H167.

Belongs to the iron/manganese superoxide dismutase family. The cofactor is Mn(2+). Fe(3+) is required as a cofactor.

It catalyses the reaction 2 superoxide + 2 H(+) = H2O2 + O2. In terms of biological role, destroys superoxide anion radicals which are normally produced within the cells and which are toxic to biological systems. Catalyzes the dismutation of superoxide anion radicals into O2 and H2O2 by successive reduction and oxidation of the transition metal ion at the active site. The chain is Superoxide dismutase [Mn/Fe] (sodA) from Streptococcus mutans serotype c (strain ATCC 700610 / UA159).